The chain runs to 505 residues: Amidophosphoribosyltransferase (505 aa).

The Nucleophile role is filled by C2. The region spanning 2-235 (CGIVGIVSQS…AGEAVYVTFD (234 aa)) is the Glutamine amidotransferase type-2 domain. Mg(2+) contacts are provided by T306, D368, and D369. Residues 484–505 (RNDNAKKKREKQASNLEIYNEQ) are disordered. Over residues 496–505 (ASNLEIYNEQ) the composition is skewed to polar residues.

The protein in the C-terminal section; belongs to the purine/pyrimidine phosphoribosyltransferase family. Requires Mg(2+) as cofactor.

The enzyme catalyses 5-phospho-beta-D-ribosylamine + L-glutamate + diphosphate = 5-phospho-alpha-D-ribose 1-diphosphate + L-glutamine + H2O. The protein operates within purine metabolism; IMP biosynthesis via de novo pathway; N(1)-(5-phospho-D-ribosyl)glycinamide from 5-phospho-alpha-D-ribose 1-diphosphate: step 1/2. Catalyzes the formation of phosphoribosylamine from phosphoribosylpyrophosphate (PRPP) and glutamine. This chain is Amidophosphoribosyltransferase, found in Haemophilus influenzae (strain ATCC 51907 / DSM 11121 / KW20 / Rd).